A 156-amino-acid chain; its full sequence is Cyanate hydratase (156 aa).

Active-site residues include Arg-96, Glu-99, and Ser-122.

The protein belongs to the cyanase family.

The enzyme catalyses cyanate + hydrogencarbonate + 3 H(+) = NH4(+) + 2 CO2. In terms of biological role, catalyzes the reaction of cyanate with bicarbonate to produce ammonia and carbon dioxide. The protein is Cyanate hydratase of Burkholderia cenocepacia (strain ATCC BAA-245 / DSM 16553 / LMG 16656 / NCTC 13227 / J2315 / CF5610) (Burkholderia cepacia (strain J2315)).